The primary structure comprises 62 residues: MARYRHSXSRSRSRYRRRRRRRSRYRSRRRRYRGRRRRRSRRGRRRRGYSRRRYSRRRRRRY.

The segment at 1 to 62 (MARYRHSXSR…RYSRRRRRRY (62 aa)) is disordered.

Belongs to the protamine P1 family. In terms of tissue distribution, testis.

It is found in the nucleus. It localises to the chromosome. Its function is as follows. Protamines substitute for histones in the chromatin of sperm during the haploid phase of spermatogenesis. They compact sperm DNA into a highly condensed, stable and inactive complex. This chain is Sperm protamine P1 (PRM1), found in Petrogale xanthopus (Yellow-footed rock wallaby).